A 463-amino-acid polypeptide reads, in one-letter code: Glutamate--tRNA ligase 2 (463 aa).

The 'HIGH' region motif lies at 11 to 21 (PSPTGYLHIGG). The 'KMSKS' region motif lies at 240-244 (KLSKR). Lys243 contributes to the ATP binding site.

This sequence belongs to the class-I aminoacyl-tRNA synthetase family. Glutamate--tRNA ligase type 1 subfamily. As to quaternary structure, monomer.

It localises to the cytoplasm. It catalyses the reaction tRNA(Glu) + L-glutamate + ATP = L-glutamyl-tRNA(Glu) + AMP + diphosphate. Its function is as follows. Catalyzes the attachment of glutamate to tRNA(Glu) in a two-step reaction: glutamate is first activated by ATP to form Glu-AMP and then transferred to the acceptor end of tRNA(Glu). The sequence is that of Glutamate--tRNA ligase 2 from Campylobacter jejuni subsp. jejuni serotype O:6 (strain 81116 / NCTC 11828).